The sequence spans 236 residues: 2,3,4,5-tetrahydropyridine-2,6-dicarboxylate N-acetyltransferase (236 aa).

The protein belongs to the transferase hexapeptide repeat family. DapH subfamily.

The enzyme catalyses (S)-2,3,4,5-tetrahydrodipicolinate + acetyl-CoA + H2O = L-2-acetamido-6-oxoheptanedioate + CoA. It participates in amino-acid biosynthesis; L-lysine biosynthesis via DAP pathway; LL-2,6-diaminopimelate from (S)-tetrahydrodipicolinate (acetylase route): step 1/3. Functionally, catalyzes the transfer of an acetyl group from acetyl-CoA to tetrahydrodipicolinate. This is 2,3,4,5-tetrahydropyridine-2,6-dicarboxylate N-acetyltransferase from Clostridium botulinum (strain Eklund 17B / Type B).